A 970-amino-acid polypeptide reads, in one-letter code: Sodium/calcium exchanger 1 (970 aa).

The first 32 residues, 1 to 32 (MLRLSLPPNVSMGFRLVALVALLFSHVDHITA), serve as a signal peptide directing secretion. Residues 33 to 71 (DTEAETGGNETTECTGSYYCKKGVILPIWEPQDPSFGDK) lie on the Extracellular side of the membrane. Asparagine 41 carries N-linked (GlcNAc...) asparagine glycosylation. A helical membrane pass occupies residues 72 to 92 (IARATVYFVAMVYMFLGVSII). Residues 93 to 133 (ADRFMSSIEVITSQEKEITIKKPNGETTKTTVRIWNETVSN) are Cytoplasmic-facing. Residues 134 to 154 (LTLMALGSSAPEILLSVIEVC) traverse the membrane as a helical segment. The stretch at 138–178 (ALGSSAPEILLSVIEVCGHNFTAGDLGPSTIVGSAAFNMFI) is one Alpha-1 repeat. The Extracellular portion of the chain corresponds to 155–167 (GHNFTAGDLGPST). Asparagine 157 carries N-linked (GlcNAc...) asparagine glycosylation. Residues 168-188 (IVGSAAFNMFIIIALCVYVVP) traverse the membrane as a helical segment. The Cytoplasmic segment spans residues 189–201 (DGETRKIKHLRVF). The helical transmembrane segment at 202-222 (FVTAAWSIFAYTWLYIILSVS) threads the bilayer. Residues 223–228 (SPGVVE) lie on the Extracellular side of the membrane. The helical transmembrane segment at 229-249 (VWEGLLTFFFFPICVVFAWVA) threads the bilayer. Over 250-797 (DRRLLFYKYV…FVPPTEYWNG (548 aa)) the chain is Cytoplasmic. Residues 251 to 270 (RRLLFYKYVYKRYRAGKQRG) are putative calmodulin-binding region. Residues serine 282 and serine 389 each carry the phosphoserine modification. 2 Calx-beta domains span residues 393–493 (VNME…VHLS) and 524–624 (ATIT…IEIG). Residues glutamate 417, aspartate 453, aspartate 478, aspartate 479, isoleucine 481, glutamate 483, glutamate 486, aspartate 530, aspartate 531, aspartate 532, glutamate 548, aspartate 584, aspartate 610, glutamate 611, glutamate 612, and glutamate 715 each coordinate Ca(2+). Residues 798 to 818 (WACFIVSILMIGLLTAFIGDL) form a helical membrane-spanning segment. The Extracellular segment spans residues 819-821 (ASH). The chain crosses the membrane as a helical span at residues 822–842 (FGCTIGLKDSVTAVVFVALGT). Residues 839–875 (ALGTSVPDTFASKVAATQDQYADASIGNVTGSNAVNV) form an Alpha-2 repeat. Residues 843 to 871 (SVPDTFASKVAATQDQYADASIGNVTGSN) are Cytoplasmic-facing. Residues 872–892 (AVNVFLGIGVAWSIAAIYHAA) form a helical membrane-spanning segment. The Extracellular portion of the chain corresponds to 893 to 903 (NGEQFKVSPGT). The helical transmembrane segment at 904–924 (LAFSVTLFTIFAFINVGVLLY) threads the bilayer. Topologically, residues 925 to 941 (RRRPEIGGELGGPRTAK) are cytoplasmic. A helical membrane pass occupies residues 942–962 (LLTSSLFVLLWLLYIFFSSLE). Over 963-970 (AYCHIKGF) the chain is Extracellular.

It belongs to the Ca(2+):cation antiporter (CaCA) (TC 2.A.19) family. SLC8 subfamily. In terms of tissue distribution, detected in heart, kidney and brain (at protein level).

It localises to the cell membrane. The enzyme catalyses Ca(2+)(in) + 3 Na(+)(out) = Ca(2+)(out) + 3 Na(+)(in). Activated by micromolar levels of Ca(2+). Mediates the exchange of one Ca(2+) ion against three to four Na(+) ions across the cell membrane, and thereby contributes to the regulation of cytoplasmic Ca(2+) levels and Ca(2+)-dependent cellular processes. Contributes to Ca(2+) transport during excitation-contraction coupling in muscle. In a first phase, voltage-gated channels mediate the rapid increase of cytoplasmic Ca(2+) levels due to release of Ca(2+) stores from the endoplasmic reticulum. SLC8A1 mediates the export of Ca(2+) from the cell during the next phase, so that cytoplasmic Ca(2+) levels rapidly return to baseline. Required for normal embryonic heart development and the onset of heart contractions. The polypeptide is Sodium/calcium exchanger 1 (Slc8a1) (Mus musculus (Mouse)).